Consider the following 274-residue polypeptide: Large ribosomal subunit protein uL2cz/uL2cy (274 aa).

Disordered stretches follow at residues 1-21 (MAIH…VDSQ) and 224-252 (NPVD…GYPA).

Belongs to the universal ribosomal protein uL2 family. Part of the 50S ribosomal subunit.

The protein localises to the plastid. It is found in the chloroplast. This Olimarabidopsis pumila (Dwarf rocket) protein is Large ribosomal subunit protein uL2cz/uL2cy (rpl2-A).